The following is a 197-amino-acid chain: Mediator of RNA polymerase II transcription subunit 21 (197 aa).

Residues 37-112 are disordered; the sequence is PPPSVPSAVP…APPRPDSPNT (76 aa). Composition is skewed to low complexity over residues 60-70 and 90-100; these read PTSGTATNTPG and PQMQQQHQEQP. Residues 140-183 are a coiled coil; it reads GIKSSEAEQQERIKQLAEELRVVEEERSARRRELRRLGEKVDGL.

It belongs to the Mediator complex subunit 21 family. As to quaternary structure, component of the Mediator complex.

Its subcellular location is the nucleus. In terms of biological role, component of the Mediator complex, a coactivator involved in the regulated transcription of nearly all RNA polymerase II-dependent genes. Mediator functions as a bridge to convey information from gene-specific regulatory proteins to the basal RNA polymerase II transcription machinery. Mediator is recruited to promoters by direct interactions with regulatory proteins and serves as a scaffold for the assembly of a functional preinitiation complex with RNA polymerase II and the general transcription factors. The chain is Mediator of RNA polymerase II transcription subunit 21 (SRB7) from Coccidioides immitis (strain RS) (Valley fever fungus).